We begin with the raw amino-acid sequence, 161 residues long: Nucleotide-binding protein NE2248 (161 aa).

Belongs to the YajQ family.

Its function is as follows. Nucleotide-binding protein. The sequence is that of Nucleotide-binding protein NE2248 from Nitrosomonas europaea (strain ATCC 19718 / CIP 103999 / KCTC 2705 / NBRC 14298).